The sequence spans 702 residues: Penicillin-binding protein activator LpoA (702 aa).

Positions 1 to 26 are cleaved as a signal peptide; that stretch reads MVPSTFLRSKPARCLPVLLATLIFAG. Cys-27 carries the N-palmitoyl cysteine lipid modification. Residue Cys-27 is the site of S-diacylglycerol cysteine attachment. The disordered stretch occupies residues 327 to 378; it reads GSRADPVQAPTQDQAAPAAEPAAQAPATSTTPQTTASPATQPVTAPAAQPQP. The segment covering 330-378 has biased composition (low complexity); the sequence is ADPVQAPTQDQAAPAAEPAAQAPATSTTPQTTASPATQPVTAPAAQPQP.

The protein belongs to the LpoA family. Interacts with PBP1a.

The protein localises to the cell outer membrane. Regulator of peptidoglycan synthesis that is essential for the function of penicillin-binding protein 1A (PBP1a). In Klebsiella pneumoniae subsp. pneumoniae (strain ATCC 700721 / MGH 78578), this protein is Penicillin-binding protein activator LpoA.